The primary structure comprises 296 residues: MTTPVLNTDFPGLKLAARGKVRDIYDLGETLLIVTTDRISAFDVIMNEGIPHKGYVLTQISAYWFRQMEDIIKNHIISTDVTDFPKECQPYADVLAGRSMWVKKAKPLAAECIVRGYISGSGWKDYQKTGAICGIKLPEGLKESDRLPQPIFTPSTKAELGTHDENISFEEMCRICGTEISTKVRDVTLAIYEKARDLADQKGIIIADTKFEYGIYDGELIIIDECMTPDSSRFWPKESYKPGGPQPSFDKQFLRDYLETLDWGKTAPAPPLPEEIVRKTGEKYMEALVKLTGKGI.

Belongs to the SAICAR synthetase family.

The enzyme catalyses 5-amino-1-(5-phospho-D-ribosyl)imidazole-4-carboxylate + L-aspartate + ATP = (2S)-2-[5-amino-1-(5-phospho-beta-D-ribosyl)imidazole-4-carboxamido]succinate + ADP + phosphate + 2 H(+). The protein operates within purine metabolism; IMP biosynthesis via de novo pathway; 5-amino-1-(5-phospho-D-ribosyl)imidazole-4-carboxamide from 5-amino-1-(5-phospho-D-ribosyl)imidazole-4-carboxylate: step 1/2. This Citrifermentans bemidjiense (strain ATCC BAA-1014 / DSM 16622 / JCM 12645 / Bem) (Geobacter bemidjiensis) protein is Phosphoribosylaminoimidazole-succinocarboxamide synthase.